The primary structure comprises 126 residues: Protein C10 (126 aa).

The residue at position 2 (alanine 2) is an N-acetylalanine.

Belongs to the UPF0456 family. In terms of tissue distribution, ubiquitously expressed, with higher expression in lung.

It is found in the cytoplasm. Its function is as follows. In brain, may be required for corpus callosum development. This Mus musculus (Mouse) protein is Protein C10 (Grcc10).